The chain runs to 429 residues: Ribosomal RNA small subunit methyltransferase B (429 aa).

S-adenosyl-L-methionine is bound by residues 254 to 260 (CAAPGGK), D277, D303, and D322. C375 (nucleophile) is an active-site residue.

Belongs to the class I-like SAM-binding methyltransferase superfamily. RsmB/NOP family.

It is found in the cytoplasm. It catalyses the reaction cytidine(967) in 16S rRNA + S-adenosyl-L-methionine = 5-methylcytidine(967) in 16S rRNA + S-adenosyl-L-homocysteine + H(+). Its function is as follows. Specifically methylates the cytosine at position 967 (m5C967) of 16S rRNA. The sequence is that of Ribosomal RNA small subunit methyltransferase B from Escherichia coli O17:K52:H18 (strain UMN026 / ExPEC).